Here is a 307-residue protein sequence, read N- to C-terminus: Acetyl-coenzyme A carboxylase carboxyl transferase subunit beta (307 aa).

Residues 1–26 (MAMAEPQDPKKGDKKTAERRGGGWLS) are disordered. Residues 7-21 (QDPKKGDKKTAERRG) show a composition bias toward basic and acidic residues. A CoA carboxyltransferase N-terminal domain is found at 45-307 (LWVKCPDTGE…LMMGRKRQAA (263 aa)).

It belongs to the AccD/PCCB family. As to quaternary structure, acetyl-CoA carboxylase is a heterohexamer composed of biotin carboxyl carrier protein (AccB), biotin carboxylase (AccC) and two subunits each of ACCase subunit alpha (AccA) and ACCase subunit beta (AccD).

Its subcellular location is the cytoplasm. It carries out the reaction N(6)-carboxybiotinyl-L-lysyl-[protein] + acetyl-CoA = N(6)-biotinyl-L-lysyl-[protein] + malonyl-CoA. It functions in the pathway lipid metabolism; malonyl-CoA biosynthesis; malonyl-CoA from acetyl-CoA: step 1/1. Functionally, component of the acetyl coenzyme A carboxylase (ACC) complex. Biotin carboxylase (BC) catalyzes the carboxylation of biotin on its carrier protein (BCCP) and then the CO(2) group is transferred by the transcarboxylase to acetyl-CoA to form malonyl-CoA. This chain is Acetyl-coenzyme A carboxylase carboxyl transferase subunit beta, found in Caulobacter vibrioides (strain ATCC 19089 / CIP 103742 / CB 15) (Caulobacter crescentus).